A 272-amino-acid polypeptide reads, in one-letter code: Phosphate import ATP-binding protein PstB 2 (272 aa).

Residues I26 to I267 enclose the ABC transporter domain. Residue G58 to S65 coordinates ATP.

The protein belongs to the ABC transporter superfamily. Phosphate importer (TC 3.A.1.7) family. In terms of assembly, the complex is composed of two ATP-binding proteins (PstB), two transmembrane proteins (PstC and PstA) and a solute-binding protein (PstS).

Its subcellular location is the cell inner membrane. The enzyme catalyses phosphate(out) + ATP + H2O = ADP + 2 phosphate(in) + H(+). In terms of biological role, part of the ABC transporter complex PstSACB involved in phosphate import. Responsible for energy coupling to the transport system. The polypeptide is Phosphate import ATP-binding protein PstB 2 (Aliivibrio fischeri (strain ATCC 700601 / ES114) (Vibrio fischeri)).